The chain runs to 201 residues: Nucleoid occlusion factor SlmA (201 aa).

Positions 14–75 constitute an HTH tetR-type domain; that stretch reads KERQQQVLEV…ALIERIEMTL (62 aa). The segment at residues 38–57 is a DNA-binding region (H-T-H motif); the sequence is TTERLSKAVGVSEGALYRYF.

Belongs to the nucleoid occlusion factor SlmA family. In terms of assembly, homodimer. Interacts with FtsZ.

It is found in the cytoplasm. It localises to the nucleoid. Its function is as follows. Required for nucleoid occlusion (NO) phenomenon, which prevents Z-ring formation and cell division over the nucleoid. Acts as a DNA-associated cell division inhibitor that binds simultaneously chromosomal DNA and FtsZ, and disrupts the assembly of FtsZ polymers. SlmA-DNA-binding sequences (SBS) are dispersed on non-Ter regions of the chromosome, preventing FtsZ polymerization at these regions. The protein is Nucleoid occlusion factor SlmA of Glaesserella parasuis serovar 5 (strain SH0165) (Haemophilus parasuis).